Consider the following 163-residue polypeptide: Ribonuclease P protein subunit p25-like protein (163 aa).

2 disordered regions span residues 1–22 and 129–163; these read MEHY…PQLP and NECG…DTRS. Over residues 143–152 the composition is skewed to low complexity; the sequence is GSMPSSSCGP. The span at 153-163 shows a compositional bias: basic residues; the sequence is RSRRRARDTRS.

This sequence belongs to the histone-like Alba family.

The protein localises to the nucleus. In terms of biological role, may be a component of ribonuclease P or MRP. In Homo sapiens (Human), this protein is Ribonuclease P protein subunit p25-like protein (RPP25L).